Here is a 221-residue protein sequence, read N- to C-terminus: Woronin body major protein (221 aa).

The Microbody targeting signal signature appears at 219–221; the sequence is SRL.

It belongs to the eIF-5A family. Hex1 subfamily. In terms of assembly, forms oligomers. Self-assembles into hexagonal rods.

It localises to the cell septum. Functionally, major component of Woronin bodies, fungal-specific organelles that occlude septal pores in order to separate intact from damaged compartments. Hex1 binds directly or indirectly to the Woronin body tether that in turn is anchored at the rim of the septal pore. This is Woronin body major protein from Emericella nidulans (strain FGSC A4 / ATCC 38163 / CBS 112.46 / NRRL 194 / M139) (Aspergillus nidulans).